A 678-amino-acid polypeptide reads, in one-letter code: RAS guanyl-releasing protein 4 (678 aa).

Basic residues-rich tracts occupy residues 1-10 and 20-32; these read MNRKDIKRKS and GHGR…RHKT. 2 disordered regions span residues 1 to 33 and 165 to 185; these read MNRK…HKTC and GDAS…MSSP. In terms of domain architecture, N-terminal Ras-GEF spans 49 to 175; it reads GVLSESSCSV…DASNLLSPGG (127 aa). The 232-residue stretch at 201–432 folds into the Ras-GEF domain; the sequence is ETEELAQHLT…YELSYAREPR (232 aa). The region spanning 466-501 is the EF-hand domain; sequence HVEQLVESVFKNYDPEGHGSISLEDFEKLSANFPFA. The Phorbol-ester/DAG-type zinc-finger motif lies at 540 to 595; sequence LHAFQEVTFRKPTFCHSCNGFVSTGPLWGVTKRGYRCQDCGLCCHRHCRDQVRVEC. 2 disordered regions span residues 598-620 and 651-678; these read RPET…LPPT and SSHS…KSSV. Residues 605 to 619 are compositionally biased toward pro residues; it reads PGPPGAPGPATPLPP.

Belongs to the RASGRP family. In terms of tissue distribution, expressed by mast cells and their progenitors (at protein level).

The protein localises to the cytoplasm. Its subcellular location is the cell membrane. In terms of biological role, functions as a cation- and diacylglycerol (DAG)-regulated nucleotide exchange factor activating Ras through the exchange of bound GDP for GTP. In neutrophils, participates in a phospholipase C-activating N-formyl peptide-activated GPCR (G protein-coupled receptor) signaling pathway by promoting Ras-mediated activation of PIK3CG/PI3Kgamma to promote neutrophil functional responses. In CD117(+) dendritic cells and mast cells, participates in an lipopolysaccharide (LPS)-activated signaling pathway that stimulates the production of interferon-gamma and other pro-inflammatory cytokines by natural killer (NK) cells. May function in mast cell differentiation. Does not appear to be required for the development of B-cells, DC-cells, T-cells, or NK-cells. The sequence is that of RAS guanyl-releasing protein 4 (Rasgrp4) from Rattus norvegicus (Rat).